A 408-amino-acid polypeptide reads, in one-letter code: MSLFSCAIKRYKEGNLILQICIGIVLGILIGIFSKDLAIFANIFGALFTGALKAIAPILVFILILTTICTKEFNHGSEKIKHIIFLYIFGTFLASLSAVSISFIFPVELVLTDIEKASTTSPAHIGEVFKTLLFQIVDNPIHALSSGNYLSILAWAIGGGFALRHCSNDAKQLFTDINEGVLKIVKFIVKLAPFGIFGLVANSVAQTGAAGLLSYIKLLIILVLTMFFVAFVINALIVFAYTKKNPYPLIFICLKHSAVFAFFTRSSAANIPVNMALCSKLNINNSLYSISIPLGATINMAGAAVTIAILSLAAAHTVGIEINFLQAMLLSVLAAFAACGASGVAGGSLLLIPLACSLFNIDYDIAMQVVAVGFIIGVIQDSVETALNSSTDVLFSAICSDNELNLKI.

A run of 9 helical transmembrane segments spans residues 14–34 (GNLILQICIGIVLGILIGIFS), 43–63 (IFGALFTGALKAIAPILVFIL), 83–103 (IIFLYIFGTFLASLSAVSISF), 143–163 (ALSSGNYLSILAWAIGGGFAL), 181–201 (VLKIVKFIVKLAPFGIFGLVA), 219–239 (LIILVLTMFFVAFVINALIVF), 247–269 (YPLIFICLKHSAVFAFFTRSSAA), 290–310 (ISIPLGATINMAGAAVTIAIL), and 332–352 (VLAAFAACGASGVAGGSLLLI).

It belongs to the dicarboxylate/amino acid:cation symporter (DAACS) (TC 2.A.23) family.

It is found in the cell inner membrane. The catalysed reaction is L-serine(in) + Na(+)(in) = L-serine(out) + Na(+)(out). The enzyme catalyses L-threonine(in) + Na(+)(in) = L-threonine(out) + Na(+)(out). Functionally, involved in the import of serine and threonine into the cell, with the concomitant import of sodium (symport system). The protein is Serine/threonine transporter SstT of Campylobacter lari (strain RM2100 / D67 / ATCC BAA-1060).